A 263-amino-acid chain; its full sequence is N-acyl homoserine lactonase AttM (263 aa).

7 residues coordinate Zn(2+): His103, His105, Asp107, His108, His180, Asp202, and His247.

Belongs to the metallo-beta-lactamase superfamily. The cofactor is Zn(2+).

The enzyme catalyses an N-acyl-L-homoserine lactone + H2O = an N-acyl-L-homoserine + H(+). The polypeptide is N-acyl homoserine lactonase AttM (Agrobacterium fabrum (strain C58 / ATCC 33970) (Agrobacterium tumefaciens (strain C58))).